Consider the following 83-residue polypeptide: Evasin P1090 (83 aa).

Positions 1 to 24 (MEVKIFAFLQIAVLIAFSLHLASA) are cleaved as a signal peptide. 3 disulfides stabilise this stretch: C44–C63, C48–C65, and C59–C76. A glycan (N-linked (GlcNAc...) asparagine) is linked at N47. An N-linked (GlcNAc...) asparagine glycan is attached at N70.

The protein resides in the secreted. In terms of biological role, salivary chemokine-binding protein which binds to host chemokines CXCL1, CXCL2, CXCL3, CXCL5, CXCL6, CXCL10, CXCL11 and CXCL13. The chain is Evasin P1090 from Ixodes ricinus (Common tick).